We begin with the raw amino-acid sequence, 134 residues long: MTRATSSAPSQRMLRVGEQVRAAITQVLQRGEVRDDVIEATVISISEVRMSPDLKIATAYVTPLGVSDHSVVIEALNRHARYIRGRLGQQLRQMKYMPEVRFRDDTSFDNYKKIDELLRSPEVSRDLDGDNDEQ.

The protein belongs to the RbfA family. Monomer. Binds 30S ribosomal subunits, but not 50S ribosomal subunits or 70S ribosomes.

The protein resides in the cytoplasm. One of several proteins that assist in the late maturation steps of the functional core of the 30S ribosomal subunit. Associates with free 30S ribosomal subunits (but not with 30S subunits that are part of 70S ribosomes or polysomes). Required for efficient processing of 16S rRNA. May interact with the 5'-terminal helix region of 16S rRNA. This Rhizobium leguminosarum bv. trifolii (strain WSM2304) protein is Ribosome-binding factor A.